We begin with the raw amino-acid sequence, 567 residues long: Delta(24)-sterol reductase (567 aa).

Residues 1–24 (MSDLEAPLRPKRKKIWVDYFVKFR) lie on the Lumenal side of the membrane. The chain crosses the membrane as a helical; Signal-anchor span at residues 25 to 45 (WILVIFVVLPISFTLYFLTYL). One can recognise an FAD-binding PCMH-type domain in the interval 45 to 231 (LGDVRSEWKS…VAAEVKLIPI (187 aa)). At 46–567 (GDVRSEWKSF…AYPEVDQPPD (522 aa)) the chain is on the cytoplasmic side. The interval 520–541 (CRRKYGAVGTFMSVYYKCKKGR) is interaction with calmodulin. Residues 548–567 (REAEQAHLDTAYPEVDQPPD) are disordered.

Belongs to the DIMINUTO family. In terms of tissue distribution, highly expressed in the apical region and root tips and lower levels in immature and mature internodes and leaves.

The protein localises to the membrane. It carries out the reaction lathosterol + NADP(+) = 5alpha-cholesta-7,24-dien-3beta-ol + NADPH + H(+). Its function is as follows. Plays a critical role in the general process of plant cell elongation. The protein is Delta(24)-sterol reductase (DIM) of Pisum sativum (Garden pea).